Reading from the N-terminus, the 267-residue chain is Probable 6-oxopurine nucleoside phosphorylase (267 aa).

Residues serine 10, 50-51 (RH), and 83-84 (SA) contribute to the phosphate site. Position 188 (methionine 188) interacts with substrate. Threonine 189 is a binding site for phosphate. 212–214 (NYA) contacts substrate.

This sequence belongs to the PNP/MTAP phosphorylase family. MTAP subfamily. As to quaternary structure, homohexamer. Dimer of a homotrimer.

The catalysed reaction is a purine D-ribonucleoside + phosphate = a purine nucleobase + alpha-D-ribose 1-phosphate. It carries out the reaction guanosine + phosphate = alpha-D-ribose 1-phosphate + guanine. It catalyses the reaction inosine + phosphate = alpha-D-ribose 1-phosphate + hypoxanthine. Its pathway is purine metabolism; purine nucleoside salvage. Purine nucleoside phosphorylase which is highly specific for 6-oxopurine nucleosides. Cleaves guanosine or inosine to respective bases and sugar-1-phosphate molecules. Involved in purine salvage. The polypeptide is Probable 6-oxopurine nucleoside phosphorylase (Thermococcus kodakarensis (strain ATCC BAA-918 / JCM 12380 / KOD1) (Pyrococcus kodakaraensis (strain KOD1))).